The primary structure comprises 509 residues: Steroid 17-alpha-hydroxylase/17,20 lyase (509 aa).

Residue asparagine 202 coordinates substrate. Cysteine 442 lines the heme pocket.

The protein belongs to the cytochrome P450 family. It depends on heme as a cofactor.

Its subcellular location is the endoplasmic reticulum membrane. It localises to the microsome membrane. It catalyses the reaction a C21-steroid + reduced [NADPH--hemoprotein reductase] + O2 = a 17alpha-hydroxy-C21-steroid + oxidized [NADPH--hemoprotein reductase] + H2O + H(+). The catalysed reaction is progesterone + reduced [NADPH--hemoprotein reductase] + O2 = 17alpha-hydroxyprogesterone + oxidized [NADPH--hemoprotein reductase] + H2O + H(+). The enzyme catalyses pregnenolone + reduced [NADPH--hemoprotein reductase] + O2 = 17alpha-hydroxypregnenolone + oxidized [NADPH--hemoprotein reductase] + H2O + H(+). It carries out the reaction 17alpha-hydroxyprogesterone + reduced [NADPH--hemoprotein reductase] + O2 = androst-4-ene-3,17-dione + acetate + oxidized [NADPH--hemoprotein reductase] + H2O + 2 H(+). It catalyses the reaction 17alpha-hydroxyprogesterone + reduced [NADPH--hemoprotein reductase] + O2 = 16alpha,17alpha-dihydroxyprogesterone + oxidized [NADPH--hemoprotein reductase] + H2O + H(+). The catalysed reaction is 16alpha,17alpha-dihydroxyprogesterone + reduced [NADPH--hemoprotein reductase] + O2 = 6beta,16alpha,17alpha-trihydroxyprogesterone + oxidized [NADPH--hemoprotein reductase] + H2O + H(+). The enzyme catalyses 17alpha-hydroxypregnenolone + reduced [NADPH--hemoprotein reductase] + O2 = 3beta-hydroxyandrost-5-en-17-one + acetate + oxidized [NADPH--hemoprotein reductase] + H2O + 2 H(+). It carries out the reaction 16alpha,17alpha-dihydroxypregnenolone + reduced [NADPH--hemoprotein reductase] + O2 = 3beta,16alpha-dihydroxy-androst-5-en-17-one + acetate + oxidized [NADPH--hemoprotein reductase] + H2O + 2 H(+). It catalyses the reaction 3beta-hydroxyandrost-5-en-17-one + reduced [NADPH--hemoprotein reductase] + O2 = 3beta,16alpha-dihydroxy-androst-5-en-17-one + oxidized [NADPH--hemoprotein reductase] + H2O + H(+). The catalysed reaction is androst-4-ene-3,17-dione + reduced [NADPH--hemoprotein reductase] + O2 = 16alpha-hydroxyandrost-4-ene-3,17-dione + oxidized [NADPH--hemoprotein reductase] + H2O + H(+). It participates in steroid hormone biosynthesis. It functions in the pathway steroid biosynthesis; glucocorticoid biosynthesis. Regulated predominantly by intracellular cAMP levels. The 17,20-lyase activity is stimulated by cytochrome b5, which acts as an allosteric effector increasing the Vmax of the lyase activity. Functionally, a cytochrome P450 monooxygenase involved in corticoid and androgen biosynthesis. Catalyzes 17-alpha hydroxylation of C21 steroids, which is common for both pathways. A second oxidative step, required only for androgen synthesis, involves an acyl-carbon cleavage. The 17-alpha hydroxy intermediates, as part of adrenal glucocorticoids biosynthesis pathway, are precursors of cortisol. Hydroxylates steroid hormones, pregnenolone and progesterone to form 17-alpha hydroxy metabolites, followed by the cleavage of the C17-C20 bond to form C19 steroids, dehydroepiandrosterone (DHEA) and androstenedione. Has 16-alpha hydroxylase activity. Catalyzes 16-alpha hydroxylation of 17-alpha hydroxy pregnenolone, followed by the cleavage of the C17-C20 bond to form 16-alpha-hydroxy DHEA. Also 16-alpha hydroxylates androgens, relevant for estriol synthesis. Mechanistically, uses molecular oxygen inserting one oxygen atom into a substrate, and reducing the second into a water molecule, with two electrons provided by NADPH via cytochrome P450 reductase (CPR; NADPH-ferrihemoprotein reductase). This chain is Steroid 17-alpha-hydroxylase/17,20 lyase (CYP17A1), found in Bison bison (American bison).